The sequence spans 516 residues: Amino-acid permease BAT1 (516 aa).

12 consecutive transmembrane segments (helical) span residues 33-53, 70-90, 113-133, 164-184, 189-209, 232-252, 275-295, 328-348, 383-403, 406-426, 452-472, and 483-503; these read LSVFSNFAISFSIISVLTGIT, YGWFLAGSFTMCVGLSMAEIC, PLASWMTGWFNIVGQWAVTAS, VVIGIHGGILFIHALLNSLPI, FIGQLAALWNLLGVLVLMILI, LGITSYAYIFVLGLLMSQYTI, GIISAIGISILFGWGYILGIS, FGSGTGGIVCLGVVAVAVFFC, VPINAVWLSALISFCMALTSL, IVAFQAMVSIATIGLYIAYAI, VVGWVAVLWVVTISVLFSLPV, and YTPVAVAGLVAITLSYWLFSA.

Belongs to the amino acid-polyamine-organocation (APC) superfamily. Amino acid/choline transporter (ACT) (TC 2.A.3.4) family. Expressed in roots, rosette leaves, stems, cauline leaves, flowers and siliques.

It is found in the mitochondrion membrane. Functionally, may play a role in primary carbon metabolism and plant growth, by mediating the transport of GABA from the cytosol to mitochondria. When expressed in a heterologous system (yeast), imports Arg and Ala across the plasma membrane and exports Lys and Glu, but does not transport proline. The chain is Amino-acid permease BAT1 (BAT1) from Arabidopsis thaliana (Mouse-ear cress).